The sequence spans 571 residues: OTU domain-containing protein 5 (571 aa).

Disordered stretches follow at residues 1–111 (MTIL…GPGG) and 146–175 (PGHS…GAGY). A compositionally biased stretch (pro residues) spans 11–30 (PPDADPANEPPPPGPMPPAP). A compositionally biased stretch (gly residues) spans 32 to 47 (RGGGVGVGGGGTGVGG). Residues 63-75 (ASPPPQGPLPGPP) are compositionally biased toward pro residues. Serine 64 is subject to Phosphoserine. Residues 84-97 (AVPPGAVAGPRPQQ) show a composition bias toward low complexity. Serine 165 carries the post-translational modification Phosphoserine. Tyrosine 175 bears the Phosphotyrosine mark. Residue serine 177 is modified to Phosphoserine. Residue threonine 195 is modified to Phosphothreonine. The OTU domain maps to 213–341 (FIIKQMKEDG…NIHYNSVVNP (129 aa)). The cys-loop stretch occupies residues 218 to 224 (MKEDGAC). Aspartate 221 is a catalytic residue. Cysteine 224 acts as the Nucleophile in catalysis. The variable-loop stretch occupies residues 273 to 283 (KRKNNCHGNHI). Serine 328 is modified (phosphoserine; by MTOR). The tract at residues 329 to 334 (YHRNIH) is his-loop. Histidine 334 is a catalytic residue. 2 positions are modified to phosphoserine: serine 337 and serine 375. Residues 418–502 (ARQVRGPSQP…PGTSSQFSAG (85 aa)) form a disordered region. Low complexity-rich tracts occupy residues 430–443 (ASAT…AASS) and 450–462 (SRSP…ASSP). At serine 452 the chain carries Phosphoserine. Threonine 507 carries the phosphothreonine modification. Serine 508 is subject to Phosphoserine; by MTOR.

Belongs to the peptidase C85 family. As to quaternary structure, interacts with TRAF3. In terms of processing, phosphorylation at Ser-177 is required for deubiquitinating activity. Phosphorylation at Ser-328, Ser-337 and Ser-508 by MTOR promotes its activity. As to expression, expressed in various tissues, including the liver and placenta, as well as in peripheral blood leukocytes.

The protein resides in the nucleus. The enzyme catalyses Thiol-dependent hydrolysis of ester, thioester, amide, peptide and isopeptide bonds formed by the C-terminal Gly of ubiquitin (a 76-residue protein attached to proteins as an intracellular targeting signal).. With respect to regulation, inhibited by N-ethyl-maleimide (NEM). Deubiquitinating enzyme that functions as a negative regulator of the innate immune system. Has peptidase activity towards 'Lys-48'- and 'Lys-63'-linked polyubiquitin chains. Can also cleave 'Lys-11'-linked ubiquitin chains (in vitro). Acts via TRAF3 deubiquitination and subsequent suppression of type I interferon (IFN) production. Controls neuroectodermal differentiation through cleaving 'Lys-48'-linked ubiquitin chains to counteract degradation of select chromatin regulators such as ARID1A, HDAC2 and HCF1. Acts as a positive regulator of mTORC1 and mTORC2 signaling following phosphorylation by MTOR: acts by mediating deubiquitination of BTRC, leading to its stability. In Homo sapiens (Human), this protein is OTU domain-containing protein 5.